We begin with the raw amino-acid sequence, 454 residues long: Bifunctional protein GlmU (454 aa).

Positions 1–226 (MALNVVILAA…AVEVEGANNR (226 aa)) are pyrophosphorylase. UDP-N-acetyl-alpha-D-glucosamine is bound by residues 8-11 (LAAG), K22, Q73, 78-79 (GT), 100-102 (YGD), G137, E151, N166, and N224. D102 contributes to the Mg(2+) binding site. N224 is a binding site for Mg(2+). Residues 227–247 (VQLAQLERAYQARAAEKLMLE) form a linker region. The N-acetyltransferase stretch occupies residues 248–454 (GANLRDPARI…GWPRPVKLKK (207 aa)). Positions 330 and 348 each coordinate UDP-N-acetyl-alpha-D-glucosamine. H360 acts as the Proton acceptor in catalysis. Residues Y363 and N374 each contribute to the UDP-N-acetyl-alpha-D-glucosamine site. Residues A377, 383-384 (NY), S402, A420, and R437 each bind acetyl-CoA.

It in the N-terminal section; belongs to the N-acetylglucosamine-1-phosphate uridyltransferase family. This sequence in the C-terminal section; belongs to the transferase hexapeptide repeat family. Homotrimer. Requires Mg(2+) as cofactor.

It is found in the cytoplasm. The catalysed reaction is alpha-D-glucosamine 1-phosphate + acetyl-CoA = N-acetyl-alpha-D-glucosamine 1-phosphate + CoA + H(+). It catalyses the reaction N-acetyl-alpha-D-glucosamine 1-phosphate + UTP + H(+) = UDP-N-acetyl-alpha-D-glucosamine + diphosphate. The protein operates within nucleotide-sugar biosynthesis; UDP-N-acetyl-alpha-D-glucosamine biosynthesis; N-acetyl-alpha-D-glucosamine 1-phosphate from alpha-D-glucosamine 6-phosphate (route II): step 2/2. Its pathway is nucleotide-sugar biosynthesis; UDP-N-acetyl-alpha-D-glucosamine biosynthesis; UDP-N-acetyl-alpha-D-glucosamine from N-acetyl-alpha-D-glucosamine 1-phosphate: step 1/1. It participates in bacterial outer membrane biogenesis; LPS lipid A biosynthesis. Catalyzes the last two sequential reactions in the de novo biosynthetic pathway for UDP-N-acetylglucosamine (UDP-GlcNAc). The C-terminal domain catalyzes the transfer of acetyl group from acetyl coenzyme A to glucosamine-1-phosphate (GlcN-1-P) to produce N-acetylglucosamine-1-phosphate (GlcNAc-1-P), which is converted into UDP-GlcNAc by the transfer of uridine 5-monophosphate (from uridine 5-triphosphate), a reaction catalyzed by the N-terminal domain. This chain is Bifunctional protein GlmU, found in Shewanella pealeana (strain ATCC 700345 / ANG-SQ1).